The primary structure comprises 330 residues: Complement factor H-related protein 1 (330 aa).

A signal peptide spans 1 to 18; that stretch reads MWLLVSVILISRISSVGG. Sushi domains are found at residues 22–84, 85–142, 145–203, 206–264, and 273–329; these read FCDF…PKCL, RLCF…KCRS, TSCV…QCKD, GKCG…KCLH, and MENY…TCAK. Cystine bridges form between C23-C72, C55-C83, C87-C129, C114-C140, C147-C190, C176-C201, C208-C251, C237-C262, C266-C317, and C300-C327. A glycan (N-linked (GlcNAc...) asparagine) is linked at N126. An N-linked (GlcNAc...) asparagine glycan is attached at N194.

Head-to-tail homodimer and heterodimer with CFHR2 or CFHR5. As to quaternary structure, (Microbial infection) Interacts with C.albicans GPD2; the interaction is direct and leads to the degradation of C3. Post-translationally, N-glycosylated. Two forms are observed; one with a single side chain and the other with two. In terms of tissue distribution, expressed by the liver and secreted in plasma.

The protein resides in the secreted. In terms of biological role, involved in complement regulation. The dimerized forms have avidity for tissue-bound complement fragments and efficiently compete with the physiological complement inhibitor CFH. Can associate with lipoproteins and may play a role in lipid metabolism. This chain is Complement factor H-related protein 1 (CFHR1), found in Homo sapiens (Human).